Here is a 431-residue protein sequence, read N- to C-terminus: Probable prephenate dehydrogenase [NADP(+)] (431 aa).

5 to 34 (FQVGIIGFGDMGRLYAEYISKAGWRVNVCD) contacts NADP(+). The Prephenate/arogenate dehydrogenase domain maps to 5–285 (FQVGIIGFGD…GENMDRNSSG (281 aa)).

The protein belongs to the prephenate/arogenate dehydrogenase family.

It localises to the cytoplasm. It catalyses the reaction prephenate + NADP(+) = 3-(4-hydroxyphenyl)pyruvate + CO2 + NADPH. It functions in the pathway amino-acid biosynthesis; L-tyrosine biosynthesis; (4-hydroxyphenyl)pyruvate from prephenate (NADP(+) route): step 1/1. The protein is Probable prephenate dehydrogenase [NADP(+)] (tyr1) of Schizosaccharomyces pombe (strain 972 / ATCC 24843) (Fission yeast).